The chain runs to 365 residues: 3-dehydroquinate synthase (365 aa).

NAD(+) is bound by residues S72–K77, T130–T131, K142, and K151. Zn(2+)-binding residues include E184, H247, and H264.

Belongs to the sugar phosphate cyclases superfamily. Dehydroquinate synthase family. Co(2+) serves as cofactor. The cofactor is Zn(2+). NAD(+) is required as a cofactor.

It localises to the cytoplasm. It catalyses the reaction 7-phospho-2-dehydro-3-deoxy-D-arabino-heptonate = 3-dehydroquinate + phosphate. It functions in the pathway metabolic intermediate biosynthesis; chorismate biosynthesis; chorismate from D-erythrose 4-phosphate and phosphoenolpyruvate: step 2/7. Catalyzes the conversion of 3-deoxy-D-arabino-heptulosonate 7-phosphate (DAHP) to dehydroquinate (DHQ). The protein is 3-dehydroquinate synthase of Bacillus cereus (strain AH187).